A 511-amino-acid polypeptide reads, in one-letter code: Maturase K (511 aa).

Belongs to the intron maturase 2 family. MatK subfamily.

It localises to the plastid. Its subcellular location is the chloroplast. In terms of biological role, usually encoded in the trnK tRNA gene intron. Probably assists in splicing its own and other chloroplast group II introns. This chain is Maturase K, found in Hordeum murinum subsp. leporinum (Mouse barley).